The sequence spans 280 residues: Energy-coupling factor transporter ATP-binding protein EcfA1 (280 aa).

The ABC transporter domain occupies 7-241 (IEVAHLKYEY…GQRLLDLGLD (235 aa)). 41–48 (GHNGSGKS) provides a ligand contact to ATP.

The protein belongs to the ABC transporter superfamily. Energy-coupling factor EcfA family. Forms a stable energy-coupling factor (ECF) transporter complex composed of 2 membrane-embedded substrate-binding proteins (S component), 2 ATP-binding proteins (A component) and 2 transmembrane proteins (T component).

The protein resides in the cell membrane. Functionally, ATP-binding (A) component of a common energy-coupling factor (ECF) ABC-transporter complex. Unlike classic ABC transporters this ECF transporter provides the energy necessary to transport a number of different substrates. This is Energy-coupling factor transporter ATP-binding protein EcfA1 from Latilactobacillus sakei subsp. sakei (strain 23K) (Lactobacillus sakei subsp. sakei).